The sequence spans 244 residues: MVRPINAEEDVTSMWVKFHESLNPIRSSLIKQEECYKTVDGDDNPIEERIKACDAGIQTSEEQKKELEHTMQSLEMIINVLEKANEKPVITNSPLTRSRRNRGTSFTANTVTFTPGMSVAFKLPYTRHNEGGDWIQCIIIKVTGEGAKQRFEVQDPEPDDDGNAGQIYKTTANHLIQIPAKGTPLPPISPKTNVLARYPETTTFYRAEVIRTLPDGSCKLRFEGEEEVGKETVVERHLVLEYNG.

Residues 109-244 form the SGF29 C-terminal domain; the sequence is NTVTFTPGMS…ERHLVLEYNG (136 aa). 2 histone H3K4me3 N-terminus binding regions span residues 155 to 157 and 200 to 203; these read DPE and ETTT. The interval 222 to 225 is histone H3K4me3 binding; that stretch reads FEGE.

It belongs to the SGF29 family. In terms of assembly, component of the 1.8 MDa SAGA (Spt-Ada-Gcn5 acetyltransferase) complex, which is composed of 19 subunits tra1, spt7, taf5, ngg1/ada3, sgf73, spt20, spt8, taf12, taf6, hfi1/ada1, ubp8, gcn5, ada2, spt3, sgf29, taf10, taf9, sgf11 and sus1. The SAGA complex is composed of 4 modules, namely the HAT (histone acetyltransferase) module (gcn5, ada2, ngg1/ada3 and sgf29), the DUB (deubiquitinating) module (ubp8, sgf11, sgf73 and sus1), the core or TAF (TBP-associated factor) module (taf5, taf6, taf9, taf10 and taf12), and the Tra1 or SPT (Suppressor of Ty) module (tra1, hfi1/ada1, spt3, spt7, spt8 and spt20). The Tra1/SPT module binds activators, the core module recruits TBP (TATA-binding protein), the HAT module contains the histone H3 acetyltransferase gcn5, and the DUB module comprises the histone H2B deubiquitinase ubp8. Interacts with dimethylated and trimethylated 'Lys-4' of histone H3 (H3K4me2 and H3K4me3), with a preference for the trimethylated form (H3K4me3).

Its subcellular location is the cytoplasm. It localises to the nucleus. Functionally, chromatin reader component of the transcription coactivator SAGA complex. SAGA acts as a general cofactor required for essentially all RNA polymerase II transcription. At the promoters, SAGA is required for transcription pre-initiation complex (PIC) recruitment. It influences RNA polymerase II transcriptional activity through different activities such as TBP interaction (via core/TAF module) and promoter selectivity, interaction with transcription activators (via Tra1/SPT module), and chromatin modification through histone acetylation (via HAT module) and deubiquitination (via DUB module). SAGA preferentially acetylates histones H3 (to form H3K9ac, H3K14ac, H3K18ac and H3K23ac) and H2B and deubiquitinates histone H2B. SAGA interacts with DNA via upstream activating sequences (UASs). Sgf29 specifically recognizes and binds methylated 'Lys-4' of histone H3 (H3K4me), with a preference for trimethylated form (H3K4me3). Required to facilitate crosstalk between gcn5 acetyltransferase activity and H3K4me3 recognition. The sequence is that of SAGA complex subunit Sgf29 (sgf29) from Schizosaccharomyces pombe (strain 972 / ATCC 24843) (Fission yeast).